We begin with the raw amino-acid sequence, 569 residues long: Glutamine--tRNA ligase (569 aa).

The segment at 1 to 23 is disordered; that stretch reads MSKDPMSKPTPEPAAHSKAGPAV. Positions 50 to 60 match the 'HIGH' region motif; that stretch reads PEPNGYLHIGH. ATP contacts are provided by residues 51 to 53 and 57 to 63; these read EPN and HIGHAKS. Residues Asp-83 and Tyr-228 each contribute to the L-glutamine site. Residues Thr-247 and 277-278 each bind ATP; that span reads RL. A 'KMSKS' region motif is present at residues 284–288; it reads ITSKR.

This sequence belongs to the class-I aminoacyl-tRNA synthetase family. In terms of assembly, monomer.

Its subcellular location is the cytoplasm. The enzyme catalyses tRNA(Gln) + L-glutamine + ATP = L-glutaminyl-tRNA(Gln) + AMP + diphosphate. The chain is Glutamine--tRNA ligase from Pseudomonas syringae pv. tomato (strain ATCC BAA-871 / DC3000).